Reading from the N-terminus, the 119-residue chain is Small ribosomal subunit protein uS10 (119 aa).

Residue A2 is modified to N-acetylalanine. K4 is covalently cross-linked (Glycyl lysine isopeptide (Lys-Gly) (interchain with G-Cter in ubiquitin)). An N6-succinyllysine; alternate modification is found at K8. A Glycyl lysine isopeptide (Lys-Gly) (interchain with G-Cter in ubiquitin); alternate cross-link involves residue K8. T9 carries the post-translational modification Phosphothreonine. N6-acetyllysine occurs at positions 34 and 75. Position 93 is a phosphoserine (S93).

Belongs to the universal ribosomal protein uS10 family. In terms of assembly, component of the 40S small ribosomal subunit. In terms of processing, polyubiquitinated by ZNF598 via 'Lys-63'-linked ubiquitin chains when a ribosome has stalled, initiating the ribosome quality control (RQC) pathway to degrade the potentially detrimental aberrant nascent polypeptide. Deubiquitinated by OTUD3 and USP21, antagonizing ZNF598 activity. Post-translationally, ufmylated by UFL1.

The protein localises to the cytoplasm. Its function is as follows. Component of the small ribosomal subunit. The ribosome is a large ribonucleoprotein complex responsible for the synthesis of proteins in the cell. This Sus scrofa (Pig) protein is Small ribosomal subunit protein uS10 (RPS20).